A 1207-amino-acid chain; its full sequence is DNA-directed RNA polymerase subunit beta' (1207 aa).

Residues Cys60, Cys62, Cys75, and Cys78 each contribute to the Zn(2+) site. The Mg(2+) site is built by Asp450, Asp452, and Asp454. Cys819, Cys893, Cys900, and Cys903 together coordinate Zn(2+).

It belongs to the RNA polymerase beta' chain family. In terms of assembly, the RNAP catalytic core consists of 2 alpha, 1 beta, 1 beta' and 1 omega subunit. When a sigma factor is associated with the core the holoenzyme is formed, which can initiate transcription. Mg(2+) is required as a cofactor. It depends on Zn(2+) as a cofactor.

It carries out the reaction RNA(n) + a ribonucleoside 5'-triphosphate = RNA(n+1) + diphosphate. Its function is as follows. DNA-dependent RNA polymerase catalyzes the transcription of DNA into RNA using the four ribonucleoside triphosphates as substrates. The polypeptide is DNA-directed RNA polymerase subunit beta' (Streptococcus pyogenes serotype M3 (strain SSI-1)).